A 208-amino-acid polypeptide reads, in one-letter code: Uridine kinase (208 aa).

Glycine 11 to serine 18 is an ATP binding site.

It belongs to the uridine kinase family.

The protein localises to the cytoplasm. It carries out the reaction uridine + ATP = UMP + ADP + H(+). It catalyses the reaction cytidine + ATP = CMP + ADP + H(+). Its pathway is pyrimidine metabolism; CTP biosynthesis via salvage pathway; CTP from cytidine: step 1/3. It participates in pyrimidine metabolism; UMP biosynthesis via salvage pathway; UMP from uridine: step 1/1. The chain is Uridine kinase from Alkaliphilus metalliredigens (strain QYMF).